Here is a 214-residue protein sequence, read N- to C-terminus: tRNA (guanine-N(7)-)-methyltransferase (214 aa).

Residues Glu43, Glu68, Asp95, and Asp117 each contribute to the S-adenosyl-L-methionine site. Residue Asp117 is part of the active site. Substrate is bound by residues Lys121, Asp153, and 191–194 (TEYE).

It belongs to the class I-like SAM-binding methyltransferase superfamily. TrmB family.

It catalyses the reaction guanosine(46) in tRNA + S-adenosyl-L-methionine = N(7)-methylguanosine(46) in tRNA + S-adenosyl-L-homocysteine. The protein operates within tRNA modification; N(7)-methylguanine-tRNA biosynthesis. In terms of biological role, catalyzes the formation of N(7)-methylguanine at position 46 (m7G46) in tRNA. This is tRNA (guanine-N(7)-)-methyltransferase from Brevibacillus brevis (strain 47 / JCM 6285 / NBRC 100599).